Reading from the N-terminus, the 35-residue chain is Entry-fusion complex protein OPG076 (35 aa).

The helical transmembrane segment at Leu-2 to Leu-22 threads the bilayer. The Virion surface portion of the chain corresponds to Arg-23 to Arg-35.

Belongs to the orthopoxvirus OPG076 family. In terms of assembly, component of the entry fusion complex (EFC) composed of OPG053, OPG076, OPG086, OPG094, OPG095, OPG099, OPG107, OPG143, OPG104, OPG147 and OPG155. Except for OPG095 and OPG053, each of the EFC proteins is required for assembly or stability of the complex. Post-translationally, unglycosylated because produced in viral factories instead of the classic ER -Golgi route.

It localises to the virion membrane. Component of the entry fusion complex (EFC), which consists of 11 proteins. During cell infection, this complex mediates entry of the virion core into the host cytoplasm by a two-step mechanism consisting of lipid mixing of the viral and cellular membranes and subsequent pore formation. The chain is Entry-fusion complex protein OPG076 (OPG076) from Vaccinia virus (strain Copenhagen) (VACV).